A 406-amino-acid chain; its full sequence is Phosphorylase b kinase gamma catalytic chain, liver/testis isoform (406 aa).

The Protein kinase domain occupies 24–291 (YDPKDIIGRG…AEQALQHPFF (268 aa)). ATP-binding positions include 30-38 (IGRGVSSVV) and K53. The Proton acceptor role is filled by D153. The tract at residues 306–330 (QRFRVAVWTILAAGRVALSSHRLRP) is calmodulin-binding (domain-N). Residues 346–370 (VRRLIDNCAFRLYGHWVKKGEQQNR) form a calmodulin-binding (domain-C) region.

It belongs to the protein kinase superfamily. CAMK Ser/Thr protein kinase family. In terms of assembly, hexadecamer of 4 heterotetramers, each composed of alpha, beta, gamma, and delta subunits. Alpha (PHKA1 or PHKA2) and beta (PHKB) are regulatory subunits, gamma (PHKG1 or PHKG2) is the catalytic subunit, and delta is calmodulin.

The enzyme catalyses 2 ATP + phosphorylase b = 2 ADP + phosphorylase a.. Functionally, catalytic subunit of the phosphorylase b kinase (PHK), which mediates the neural and hormonal regulation of glycogen breakdown (glycogenolysis) by phosphorylating and thereby activating glycogen phosphorylase. May regulate glycogeneolysis in the testis. In vitro, phosphorylates PYGM. This Rattus norvegicus (Rat) protein is Phosphorylase b kinase gamma catalytic chain, liver/testis isoform (Phkg2).